We begin with the raw amino-acid sequence, 421 residues long: Serine--tRNA ligase (421 aa).

230–232 (TAE) is a binding site for L-serine. 261-263 (RRE) lines the ATP pocket. Residue glutamate 284 participates in L-serine binding. ATP is bound at residue 348 to 351 (EISS). Serine 383 contacts L-serine.

This sequence belongs to the class-II aminoacyl-tRNA synthetase family. Type-1 seryl-tRNA synthetase subfamily. In terms of assembly, homodimer. The tRNA molecule binds across the dimer.

The protein localises to the cytoplasm. It carries out the reaction tRNA(Ser) + L-serine + ATP = L-seryl-tRNA(Ser) + AMP + diphosphate + H(+). It catalyses the reaction tRNA(Sec) + L-serine + ATP = L-seryl-tRNA(Sec) + AMP + diphosphate + H(+). It participates in aminoacyl-tRNA biosynthesis; selenocysteinyl-tRNA(Sec) biosynthesis; L-seryl-tRNA(Sec) from L-serine and tRNA(Sec): step 1/1. Its function is as follows. Catalyzes the attachment of serine to tRNA(Ser). Is also able to aminoacylate tRNA(Sec) with serine, to form the misacylated tRNA L-seryl-tRNA(Sec), which will be further converted into selenocysteinyl-tRNA(Sec). The chain is Serine--tRNA ligase from Finegoldia magna (strain ATCC 29328 / DSM 20472 / WAL 2508) (Peptostreptococcus magnus).